A 238-amino-acid polypeptide reads, in one-letter code: uncharacterized protein (238 aa).

It belongs to the chlamydial CPn_0658/CT_538/TC_0825 family.

This is an uncharacterized protein from Chlamydia muridarum (strain MoPn / Nigg).